Consider the following 267-residue polypeptide: 4-diphosphocytidyl-2-C-methyl-D-erythritol kinase (267 aa).

Residue Lys8 is part of the active site. 90–100 (PIGAGLGGGSS) provides a ligand contact to ATP. Asp132 is a catalytic residue.

Belongs to the GHMP kinase family. IspE subfamily.

It catalyses the reaction 4-CDP-2-C-methyl-D-erythritol + ATP = 4-CDP-2-C-methyl-D-erythritol 2-phosphate + ADP + H(+). It functions in the pathway isoprenoid biosynthesis; isopentenyl diphosphate biosynthesis via DXP pathway; isopentenyl diphosphate from 1-deoxy-D-xylulose 5-phosphate: step 3/6. Functionally, catalyzes the phosphorylation of the position 2 hydroxy group of 4-diphosphocytidyl-2C-methyl-D-erythritol. The polypeptide is 4-diphosphocytidyl-2-C-methyl-D-erythritol kinase (Azobacteroides pseudotrichonymphae genomovar. CFP2).